Here is a 64-residue protein sequence, read N- to C-terminus: Translation machinery-associated protein 7 (64 aa).

Disordered regions lie at residues 1–38 (MSSR…ADAA) and 45–64 (ANMK…SGKK). Residues 27–38 (IAFKEKQKADAA) are compositionally biased toward basic and acidic residues. Residues 53–64 (LVGGGIKKSGKK) show a composition bias toward gly residues.

The protein belongs to the TMA7 family. As to quaternary structure, interacts with the 40S ribosomal subunit.

It is found in the cytoplasm. It localises to the nucleus. Its function is as follows. Involved in protein synthesis. The sequence is that of Translation machinery-associated protein 7 (TMA7) from Saccharomyces cerevisiae (strain ATCC 204508 / S288c) (Baker's yeast).